The chain runs to 447 residues: Tubulin alpha chain (447 aa).

Residues glutamine 11, glutamate 71, glycine 144, threonine 145, threonine 179, asparagine 206, and asparagine 228 each coordinate GTP. Position 71 (glutamate 71) interacts with Mg(2+). The active site involves glutamate 254.

This sequence belongs to the tubulin family. As to quaternary structure, dimer of alpha and beta chains. A typical microtubule is a hollow water-filled tube with an outer diameter of 25 nm and an inner diameter of 15 nM. Alpha-beta heterodimers associate head-to-tail to form protofilaments running lengthwise along the microtubule wall with the beta-tubulin subunit facing the microtubule plus end conferring a structural polarity. Microtubules usually have 13 protofilaments but different protofilament numbers can be found in some organisms and specialized cells. Requires Mg(2+) as cofactor.

The protein localises to the cytoplasm. It is found in the cytoskeleton. The catalysed reaction is GTP + H2O = GDP + phosphate + H(+). In terms of biological role, tubulin is the major constituent of microtubules, a cylinder consisting of laterally associated linear protofilaments composed of alpha- and beta-tubulin heterodimers. Microtubules grow by the addition of GTP-tubulin dimers to the microtubule end, where a stabilizing cap forms. Below the cap, tubulin dimers are in GDP-bound state, owing to GTPase activity of alpha-tubulin. The protein is Tubulin alpha chain (TUBA) of Avena sativa (Oat).